The primary structure comprises 306 residues: Bifunctional protein FolD (306 aa).

Residues 164–166 (GRS), Ser189, and Thr230 contribute to the NADP(+) site.

It belongs to the tetrahydrofolate dehydrogenase/cyclohydrolase family. Homodimer.

The catalysed reaction is (6R)-5,10-methylene-5,6,7,8-tetrahydrofolate + NADP(+) = (6R)-5,10-methenyltetrahydrofolate + NADPH. It catalyses the reaction (6R)-5,10-methenyltetrahydrofolate + H2O = (6R)-10-formyltetrahydrofolate + H(+). It participates in one-carbon metabolism; tetrahydrofolate interconversion. Functionally, catalyzes the oxidation of 5,10-methylenetetrahydrofolate to 5,10-methenyltetrahydrofolate and then the hydrolysis of 5,10-methenyltetrahydrofolate to 10-formyltetrahydrofolate. The protein is Bifunctional protein FolD of Solibacter usitatus (strain Ellin6076).